A 143-amino-acid chain; its full sequence is Histone H2B.2, sperm (143 aa).

The disordered stretch occupies residues 1–49; sequence MPKSPSKSSPRKGSPRKGSPRKGSPKRGGKGAKRAGKGGRRNVVKRRRR. 5 short sequence motifs (SPKK motif) span residues 4-7, 9-12, 14-17, 19-22, and 24-27; these read SPSK, SPRK, and SPKR. Residues 9 to 49 show a composition bias toward basic residues; sequence SPRKGSPRKGSPRKGSPKRGGKGAKRAGKGGRRNVVKRRRR. A phosphoserine mark is found at Ser-14, Ser-19, and Ser-24. The O-linked (GlcNAc) serine glycan is linked to Ser-129. Lys-137 participates in a covalent cross-link: Glycyl lysine isopeptide (Lys-Gly) (interchain with G-Cter in ubiquitin).

The protein belongs to the histone H2B family. In terms of assembly, the nucleosome is a histone octamer containing two molecules each of H2A, H2B, H3 and H4 assembled in one H3-H4 heterotetramer and two H2A-H2B heterodimers. The octamer wraps approximately 147 bp of DNA. In terms of processing, monoubiquitination of Lys-137 gives a specific tag for epigenetic transcriptional activation and is also prerequisite for histone H3 'Lys-4' and 'Lys-79' methylation. Phosphorylated on SPKK motifs 3, 4 and 5; which may regulate DNA binding. Dephosphorylated during maturation of spermatids to mature sperm and rephosphorylated at fertilization. Post-translationally, glcNAcylation at Ser-129 promotes monoubiquitination of Lys-137. It fluctuates in response to extracellular glucose, and associates with transcribed genes.

It localises to the nucleus. Its subcellular location is the chromosome. Its function is as follows. Core component of nucleosome. Nucleosomes wrap and compact DNA into chromatin, limiting DNA accessibility to the cellular machineries which require DNA as a template. Histones thereby play a central role in transcription regulation, DNA repair, DNA replication and chromosomal stability. DNA accessibility is regulated via a complex set of post-translational modifications of histones, also called histone code, and nucleosome remodeling. The protein is Histone H2B.2, sperm of Psammechinus miliaris (Green sea urchin).